Reading from the N-terminus, the 540-residue chain is Chaperonin GroEL (540 aa).

Residues 30-33, Lys-51, 87-91, Gly-415, 479-481, and Asp-495 each bind ATP; these read TLAP, DGTTT, and NAA.

The protein belongs to the chaperonin (HSP60) family. In terms of assembly, forms a cylinder of 14 subunits composed of two heptameric rings stacked back-to-back. Interacts with the co-chaperonin GroES.

It localises to the cytoplasm. It carries out the reaction ATP + H2O + a folded polypeptide = ADP + phosphate + an unfolded polypeptide.. Its function is as follows. Together with its co-chaperonin GroES, plays an essential role in assisting protein folding. The GroEL-GroES system forms a nano-cage that allows encapsulation of the non-native substrate proteins and provides a physical environment optimized to promote and accelerate protein folding. The sequence is that of Chaperonin GroEL from Methylovorus sp. (strain SS1 / DSM 11726).